The chain runs to 78 residues: UPF0291 protein Ldb1355 (78 aa).

It belongs to the UPF0291 family.

Its subcellular location is the cytoplasm. The polypeptide is UPF0291 protein Ldb1355 (Lactobacillus delbrueckii subsp. bulgaricus (strain ATCC 11842 / DSM 20081 / BCRC 10696 / JCM 1002 / NBRC 13953 / NCIMB 11778 / NCTC 12712 / WDCM 00102 / Lb 14)).